The chain runs to 244 residues: Carboxy-S-adenosyl-L-methionine synthase (244 aa).

S-adenosyl-L-methionine contacts are provided by residues Tyr41, 66-68 (GCS), 91-92 (DN), 119-120 (DI), Asn134, and Arg201.

This sequence belongs to the class I-like SAM-binding methyltransferase superfamily. Cx-SAM synthase family. As to quaternary structure, homodimer.

It carries out the reaction prephenate + S-adenosyl-L-methionine = carboxy-S-adenosyl-L-methionine + 3-phenylpyruvate + H2O. In terms of biological role, catalyzes the conversion of S-adenosyl-L-methionine (SAM) to carboxy-S-adenosyl-L-methionine (Cx-SAM). This is Carboxy-S-adenosyl-L-methionine synthase from Photobacterium profundum (strain SS9).